The chain runs to 261 residues: Syntaxin-7 (261 aa).

S2 bears the N-acetylserine mark. Over 2-238 (SYTPGVGGDP…DYQRKSRKTL (237 aa)) the chain is Cytoplasmic. A Phosphothreonine modification is found at T4. Position 45 is a phosphoserine (S45). A coiled-coil region spans residues 47-69 (ELRQQLQQKQQYTNQLTKETDKY). S75 is modified (phosphoserine). T79 bears the Phosphothreonine mark. 4 positions are modified to phosphoserine: S125, S126, S129, and S205. Residues 129–148 (SGSFPEDSSKERNLVSWESQ) are disordered. Residues 165 to 227 (LRLIHERESS…QQANQQLSRA (63 aa)) form the t-SNARE coiled-coil homology domain. The chain crosses the membrane as a helical; Anchor for type IV membrane protein span at residues 239–259 (CIIILILVIGVVIIGLIIWGL). The Vesicular portion of the chain corresponds to 260–261 (NR).

The protein belongs to the syntaxin family. As to quaternary structure, forms a SNARE complex with VTI1B, STX8 and VAMP8 which functions in the homotypic fusion of late endosomes. Component of the SNARE complex composed of STX7, STX8, VAMP7 and VTI1B that is required for heterotypic fusion of late endosomes with lysosomes. Interacts with VPS11, VPS16 and VPS18. Interacts with VPS33A. Interacts with TPC1.

Its subcellular location is the early endosome membrane. Its function is as follows. May be involved in protein trafficking from the plasma membrane to the early endosome (EE) as well as in homotypic fusion of endocytic organelles. Mediates the endocytic trafficking from early endosomes to late endosomes and lysosomes. This Pongo abelii (Sumatran orangutan) protein is Syntaxin-7 (STX7).